Here is a 182-residue protein sequence, read N- to C-terminus: Orotate phosphoribosyltransferase (182 aa).

5-phospho-alpha-D-ribose 1-diphosphate-binding positions include arginine 93, lysine 94, lysine 97, and glutamate 119–serine 127. Orotate is bound by residues threonine 123 and arginine 151.

Belongs to the purine/pyrimidine phosphoribosyltransferase family. PyrE subfamily. In terms of assembly, homodimer. It depends on Mg(2+) as a cofactor.

It catalyses the reaction orotidine 5'-phosphate + diphosphate = orotate + 5-phospho-alpha-D-ribose 1-diphosphate. It participates in pyrimidine metabolism; UMP biosynthesis via de novo pathway; UMP from orotate: step 1/2. Its function is as follows. Catalyzes the transfer of a ribosyl phosphate group from 5-phosphoribose 1-diphosphate to orotate, leading to the formation of orotidine monophosphate (OMP). The protein is Orotate phosphoribosyltransferase of Haloquadratum walsbyi (strain DSM 16790 / HBSQ001).